A 245-amino-acid polypeptide reads, in one-letter code: 1-(5-phosphoribosyl)-5-[(5-phosphoribosylamino)methylideneamino] imidazole-4-carboxamide isomerase (245 aa).

The Proton acceptor role is filled by Asp-8. Asp-130 serves as the catalytic Proton donor.

It belongs to the HisA/HisF family.

The protein localises to the cytoplasm. It catalyses the reaction 1-(5-phospho-beta-D-ribosyl)-5-[(5-phospho-beta-D-ribosylamino)methylideneamino]imidazole-4-carboxamide = 5-[(5-phospho-1-deoxy-D-ribulos-1-ylimino)methylamino]-1-(5-phospho-beta-D-ribosyl)imidazole-4-carboxamide. It functions in the pathway amino-acid biosynthesis; L-histidine biosynthesis; L-histidine from 5-phospho-alpha-D-ribose 1-diphosphate: step 4/9. The sequence is that of 1-(5-phosphoribosyl)-5-[(5-phosphoribosylamino)methylideneamino] imidazole-4-carboxamide isomerase from Pseudomonas fluorescens (strain ATCC BAA-477 / NRRL B-23932 / Pf-5).